A 121-amino-acid chain; its full sequence is D-ornithine 4,5-aminomutase subunit alpha (121 aa).

In terms of assembly, heterotetramer of 2 alpha (OraS) and 2 beta (OraE) subunits.

It catalyses the reaction D-ornithine = (2R,4S)-2,4-diaminopentanoate. Its activity is regulated as follows. Increased activity in the presence of dithiothreitol (DTT) in vitro. Inhibited by 1 mM potassium phosphate and potassium chloride. Inhibited by L-alpha-ornithine, D,L-alpha-lysine, L-beta-lysine (50%-60%), L-alpha-lysine (26%) and by delta-amino-n-valeric acid to a lesser extent. Significant decrease in activity is observed in the presence of 0.2 mM p-chloromercuribenzoate, N-ethylmaleimide and also by 2 mM iodoacetate to a lesser extent but not inhibited by arsenite. Its function is as follows. Component of a complex that catalyzes the reversible migration of the omega amino group of D-ornithine to C-4 to form (2R,4S)-2,4-diaminopentanoic acid. The role of OraS remains obscure; however, it seems to be required for a correct folding of the OraE subunit. The complex is active only on D-ornithine and 2,4-diaminopentanoic acid and not active on L-ornithine, L-beta-lysine, L-alpha-lysine or D-alpha-lysine. The chain is D-ornithine 4,5-aminomutase subunit alpha (oraS) from Acetoanaerobium sticklandii (strain ATCC 12662 / DSM 519 / JCM 1433 / CCUG 9281 / NCIMB 10654 / HF) (Clostridium sticklandii).